The sequence spans 183 residues: A-type ATP synthase subunit E (183 aa).

This sequence belongs to the V-ATPase E subunit family. Has multiple subunits, A(3), B(3), C, D, E, F, G, I and K(x); there may be a few other subunits as well.

It localises to the cell membrane. Functionally, component of the A-type ATP synthase that produces ATP from ADP in the presence of a proton gradient across the membrane. This Methanosarcina mazei (strain ATCC BAA-159 / DSM 3647 / Goe1 / Go1 / JCM 11833 / OCM 88) (Methanosarcina frisia) protein is A-type ATP synthase subunit E.